A 198-amino-acid chain; its full sequence is Peroxiredoxin-2 (198 aa).

N-acetylalanine is present on Ala-2. A Thioredoxin domain is found at 6–164 (AHIGKPAPDF…ALRLVQAFQY (159 aa)). Cys-51 functions as the Cysteine sulfenic acid (-SOH) intermediate in the catalytic mechanism. A Phosphoserine modification is found at Ser-112. A Phosphothreonine modification is found at Thr-182. Lys-196 is modified (N6-acetyllysine).

It belongs to the peroxiredoxin family. AhpC/Prx1 subfamily. Homodimer; disulfide-linked, upon oxidation. 5 homodimers assemble to form a ring-like decamer. Interacts with TIPIN. In terms of processing, the enzyme can be inactivated by further oxidation of the cysteine sulfenic acid (C(P)-SOH) to sulphinic acid (C(P)-SO2H) instead of its condensation to a disulfide bond. It can be reactivated by forming a transient disulfide bond with sulfiredoxin SRXN1, which reduces the cysteine sulfinic acid in an ATP- and Mg-dependent manner. Acetylation increases resistance to transition to high molecular-mass complexes. Deacetylated by HDAC6 which decreases reducing activity.

It localises to the cytoplasm. The enzyme catalyses a hydroperoxide + [thioredoxin]-dithiol = an alcohol + [thioredoxin]-disulfide + H2O. Its function is as follows. Thiol-specific peroxidase that catalyzes the reduction of hydrogen peroxide and organic hydroperoxides to water and alcohols, respectively. Plays a role in cell protection against oxidative stress by detoxifying peroxides and as sensor of hydrogen peroxide-mediated signaling events. Might participate in the signaling cascades of growth factors and tumor necrosis factor-alpha by regulating the intracellular concentrations of H(2)O(2). In Rattus norvegicus (Rat), this protein is Peroxiredoxin-2 (Prdx2).